The sequence spans 496 residues: Maturase K (496 aa).

Belongs to the intron maturase 2 family. MatK subfamily.

Its subcellular location is the plastid. It localises to the chloroplast. Functionally, usually encoded in the trnK tRNA gene intron. Probably assists in splicing its own and other chloroplast group II introns. The sequence is that of Maturase K from Paeonia officinalis (Common peony).